The sequence spans 2315 residues: Receptor-type tyrosine-protein phosphatase zeta (2315 aa).

An N-terminal signal peptide occupies residues 1–24 (MRILKRFLACIQLLCVCRLDWANG). Residues 25 to 1636 (YYRQQRKLVE…LAEGLESEKK (1612 aa)) are Extracellular-facing. The Alpha-carbonic anhydrase domain occupies 36–300 (IGWSYTGALN…KFSRQVFSSY (265 aa)). 2 disulfide bridges follow: cysteine 56-cysteine 240 and cysteine 133-cysteine 264. 6 N-linked (GlcNAc...) asparagine glycosylation sites follow: asparagine 105, asparagine 134, asparagine 223, asparagine 232, asparagine 324, and asparagine 381. A Fibronectin type-III domain is found at 314–413 (EPENVQADPE…LIVDMPTDNP (100 aa)). Disordered regions lie at residues 442–462 (IVNP…PQIS) and 477–507 (AKTN…SQPV). The span at 496-507 (PNTSLNSTSQPV) shows a compositional bias: polar residues. 3 N-linked (GlcNAc...) asparagine glycosylation sites follow: asparagine 497, asparagine 501, and asparagine 552. An O-linked (Xyl...) (chondroitin sulfate) serine glycan is attached at serine 587. 2 N-linked (GlcNAc...) asparagine glycosylation sites follow: asparagine 602 and asparagine 629. Positions 628 to 650 (RNASEDSTSSGSEESLKDPSMEG) are disordered. Serine 637 carries the phosphoserine; alternate modification. Serine 637 carries O-linked (Xyl...) (chondroitin sulfate) serine; alternate glycosylation. Serine 639 carries the post-translational modification Phosphoserine. An N-linked (GlcNAc...) asparagine glycan is attached at asparagine 677. Serine 997 carries an O-linked (Xyl...) (chondroitin sulfate) serine glycan. N-linked (GlcNAc...) asparagine glycosylation is found at asparagine 1017, asparagine 1050, asparagine 1082, and asparagine 1122. Polar residues predominate over residues 1123–1138 (FSVQPTHTVSQASGDT). Disordered stretches follow at residues 1123 to 1160 (FSVQ…SSEM), 1397 to 1523 (KATS…EEND), 1543 to 1572 (LTSD…SFAD), and 1584 to 1621 (AGDS…NSSH). Residues 1145 to 1159 (SANSEPASSDPASSE) are compositionally biased toward low complexity. Acidic residues predominate over residues 1417–1432 (EDGDTDDDGDDDDDDR). The span at 1450–1465 (ESQEKVMNDSDTHENS) shows a compositional bias: basic and acidic residues. Residue asparagine 1457 is glycosylated (N-linked (GlcNAc...) asparagine). Polar residues-rich tracts occupy residues 1466–1479 (LMDQ…SLSE) and 1487–1513 (VTSV…GLSQ). 2 O-linked (Xyl...) (chondroitin sulfate) serine glycosylation sites follow: serine 1549 and serine 1551. Polar residues-rich tracts occupy residues 1554–1572 (GTSD…SFAD) and 1593–1606 (FPQS…SENS). Residue asparagine 1562 is glycosylated (N-linked (GlcNAc...) asparagine). An N-linked (GlcNAc...) asparagine glycan is attached at asparagine 1618. The helical transmembrane segment at 1637–1662 (AVIPLVIVSALTFICLVVLVGILIYW) threads the bilayer. Topologically, residues 1663–2315 (RKCFQTAHFY…NIAESLESLV (653 aa)) are cytoplasmic. Phosphothreonine is present on residues threonine 1684 and threonine 1687. 2 consecutive Tyrosine-protein phosphatase domains span residues 1717-1992 (FTEE…LVEA) and 2023-2282 (LEKQ…ILSL). Residues aspartate 1901, 1933-1939 (CSAGVGR), and glutamine 1977 each bind substrate. The Phosphocysteine intermediate role is filled by cysteine 1933. Serine 2055 carries the post-translational modification Phosphoserine.

It belongs to the protein-tyrosine phosphatase family. Receptor class 5 subfamily. As to quaternary structure, the carbonic-anhydrase like domain interacts with CNTN1 (contactin). Interacts with PTN. Interaction with PTN promotes formation of homooligomers; oligomerization impairs phosphatase activity. Interacts (via chondroitin sulfate chains) with MDK (via C-terminal); this interaction is inhibited by PTN; this interaction promotes neuronal migration. In terms of tissue distribution, specifically expressed in the central nervous system, where it is localized in the Purkinje cell layer of the cerebellum, the dentate gyrus, and the subependymal layer of the anterior horn of the lateral ventricle. Developmentally regulated in the brain.

It localises to the cell membrane. It is found in the secreted. It catalyses the reaction O-phospho-L-tyrosyl-[protein] + H2O = L-tyrosyl-[protein] + phosphate. Functionally, protein tyrosine phosphatase that negatively regulates oligodendrocyte precursor proliferation in the embryonic spinal cord. Required for normal differentiation of the precursor cells into mature, fully myelinating oligodendrocytes. May play a role in protecting oligondendrocytes against apoptosis. May play a role in the establishment of contextual memory, probably via the dephosphorylation of proteins that are part of important signaling cascades. The protein is Receptor-type tyrosine-protein phosphatase zeta (PTPRZ1) of Homo sapiens (Human).